Here is a 369-residue protein sequence, read N- to C-terminus: Somatostatin receptor type 2 (369 aa).

Residues 1-43 (MDMAYELLNGSQPWLSSPFDLNGSVATANSSNQTEPYYDLTSN) lie on the Extracellular side of the membrane. Asn9, Asn22, Asn29, and Asn32 each carry an N-linked (GlcNAc...) asparagine glycan. A helical transmembrane segment spans residues 44–67 (AVLTFIYFVVCIIGLCGNTLVIYV). The Cytoplasmic portion of the chain corresponds to 68–78 (ILRYAKMKTIT). Residues 79 to 103 (NIYILNLAIADELFMLGLPFLAMQV) traverse the membrane as a helical segment. Over 104–118 (ALVHWPFGKAICRVV) the chain is Extracellular. Cys115 and Cys193 are oxidised to a cystine. The helical transmembrane segment at 119–138 (MTVDGINQFTSIFCLTVMSI) threads the bilayer. Over 139–161 (DRYLAVVHPIKSAKWRRPRTAKM) the chain is Cytoplasmic. Residues 162–181 (INVAVWGVSLLVILPIMIYA) traverse the membrane as a helical segment. The Extracellular portion of the chain corresponds to 182–207 (GLRSNQWGRSSCTINWPGESGAWYTG). Residues 208-229 (FIIYAFILGFLVPLTIICLCYL) traverse the membrane as a helical segment. The Cytoplasmic segment spans residues 230–253 (FIIIKVKSSGIRVGSSKRKKSEKK). A helical membrane pass occupies residues 254–278 (VTRMVSIVVAVFIFCWLPFYIFNVS). Topologically, residues 279-288 (SVSVAISPTP) are extracellular. A helical transmembrane segment spans residues 289 to 303 (ALKGMFDFVVVLTYA). At 304 to 369 (NSCANPILYA…LLNGDLQTSI (66 aa)) the chain is on the cytoplasmic side. The S-palmitoyl cysteine moiety is linked to residue Cys328. 3 positions are modified to phosphoserine: Ser341, Ser343, and Ser348. Residues Thr353 and Thr354 each carry the phosphothreonine modification.

The protein belongs to the G-protein coupled receptor 1 family. Homodimer and heterodimer with SSTR3 and SSTR5. Heterodimerization with SSTR3 inactivates SSTR3 receptor function. Heterodimerization with SSTR5 is enhanced by agonist stimulation of SSTR2 and increases SSTR2 cell growth inhibition activity. Following agonist stimulation, homodimers dissociate into monomers which is required for receptor internalization. Interacts with beta-arrestin; this interaction is necessary for receptor internalization and is destabilized by heterodimerization with SSTR5 which results in increased recycling of SSTR2 to the cell surface. Interacts (via C-terminus) with SHANK1 (via PDZ domain). In terms of processing, phosphorylated on serine and threonine residues in response to agonist stimulation, leading to receptor desensitization and rapid internalization. Phosphorylated to a greater extent on serine than threonine residues. Threonine phosphorylation is required for arrestin binding and receptor endocytosis but is not necessary for desensitization.

The protein resides in the cell membrane. It is found in the cytoplasm. Receptor for somatostatin-14 and -28. This receptor is coupled via pertussis toxin sensitive G proteins to inhibition of adenylyl cyclase. In addition it stimulates phosphotyrosine phosphatase and PLC via pertussis toxin insensitive as well as sensitive G proteins. Inhibits calcium entry by suppressing voltage-dependent calcium channels. Acts as the functionally dominant somatostatin receptor in pancreatic alpha- and beta-cells where it mediates the inhibitory effect of somatostatin-14 on hormone secretion. Inhibits cell growth through enhancement of MAPK1 and MAPK2 phosphorylation and subsequent up-regulation of CDKN1B. Stimulates neuronal migration and axon outgrowth and may participate in neuron development and maturation during brain development. Mediates negative regulation of insulin receptor signaling through PTPN6. Inactivates SSTR3 receptor function following heterodimerization. The polypeptide is Somatostatin receptor type 2 (SSTR2) (Sus scrofa (Pig)).